The primary structure comprises 213 residues: 3,4-dihydroxy-2-butanone 4-phosphate synthase (213 aa).

D-ribulose 5-phosphate is bound by residues 37 to 38 (RE), Asp-42, 150 to 154 (RSGHT), and Glu-174. Glu-38 contacts Mg(2+). His-153 contributes to the Mg(2+) binding site.

It belongs to the DHBP synthase family. As to quaternary structure, homodimer. Mg(2+) is required as a cofactor. The cofactor is Mn(2+).

It catalyses the reaction D-ribulose 5-phosphate = (2S)-2-hydroxy-3-oxobutyl phosphate + formate + H(+). Its pathway is cofactor biosynthesis; riboflavin biosynthesis; 2-hydroxy-3-oxobutyl phosphate from D-ribulose 5-phosphate: step 1/1. In terms of biological role, catalyzes the conversion of D-ribulose 5-phosphate to formate and 3,4-dihydroxy-2-butanone 4-phosphate. The polypeptide is 3,4-dihydroxy-2-butanone 4-phosphate synthase (Blochmanniella floridana).